We begin with the raw amino-acid sequence, 119 residues long: Ribonuclease P protein component (119 aa).

It belongs to the RnpA family. Consists of a catalytic RNA component (M1 or rnpB) and a protein subunit.

The enzyme catalyses Endonucleolytic cleavage of RNA, removing 5'-extranucleotides from tRNA precursor.. RNaseP catalyzes the removal of the 5'-leader sequence from pre-tRNA to produce the mature 5'-terminus. It can also cleave other RNA substrates such as 4.5S RNA. The protein component plays an auxiliary but essential role in vivo by binding to the 5'-leader sequence and broadening the substrate specificity of the ribozyme. This Escherichia coli O157:H7 protein is Ribonuclease P protein component.